Here is a 218-residue protein sequence, read N- to C-terminus: Thiopurine S-methyltransferase (218 aa).

S-adenosyl-L-methionine-binding residues include tryptophan 10, leucine 45, glutamate 66, and arginine 123.

This sequence belongs to the class I-like SAM-binding methyltransferase superfamily. TPMT family.

It localises to the cytoplasm. The catalysed reaction is S-adenosyl-L-methionine + a thiopurine = S-adenosyl-L-homocysteine + a thiopurine S-methylether.. The sequence is that of Thiopurine S-methyltransferase from Shewanella sp. (strain MR-4).